We begin with the raw amino-acid sequence, 194 residues long: Probable GTP-binding protein EngB (194 aa).

One can recognise an EngB-type G domain in the interval 23-194; it reads LNGEFVFVGR…YELIEIFGGV (172 aa). Residues 31 to 38, 57 to 61, 75 to 78, 143 to 146, and 173 to 175 each bind GTP; these read GRSNVGKS, GKTAS, DLPG, TKMD, and YSA. Positions 38 and 59 each coordinate Mg(2+).

It belongs to the TRAFAC class TrmE-Era-EngA-EngB-Septin-like GTPase superfamily. EngB GTPase family. It depends on Mg(2+) as a cofactor.

In terms of biological role, necessary for normal cell division and for the maintenance of normal septation. The sequence is that of Probable GTP-binding protein EngB from Thermosipho africanus (strain TCF52B).